The following is a 208-amino-acid chain: MKYIEIDEELYRFIASKTERIGESASDILRRLLNLSVENVDVSLPTDISHPSLESQSPVNRHPVFDQAKAAVEKVIADQNSANEHYPVDEDIASSTSIDFDAMVSQHLLSQQKGAVGRFMYLLSSLESTAGSDFDKVLNVQGKGRLYFARSKQALLNSSKSSNPKEIASSGFWVTTNNNTAKKQTILTEVLEHLGCDSERAKSIAEHI.

Positions 115–116 (AV) are interaction with DNA.

Belongs to the SeqA family. As to quaternary structure, homodimer. Polymerizes to form helical filaments.

It localises to the cytoplasm. Functionally, negative regulator of replication initiation, which contributes to regulation of DNA replication and ensures that replication initiation occurs exactly once per chromosome per cell cycle. Binds to pairs of hemimethylated GATC sequences in the oriC region, thus preventing assembly of replication proteins and re-initiation at newly replicated origins. Repression is relieved when the region becomes fully methylated. This Shewanella frigidimarina (strain NCIMB 400) protein is Negative modulator of initiation of replication.